Here is a 97-residue protein sequence, read N- to C-terminus: Large ribosomal subunit protein eL21 (97 aa).

The tract at residues 1–26 (MQKSEGFRSKTRYKLQKHPRQKGMAP) is disordered. The segment covering 9–21 (SKTRYKLQKHPRQ) has biased composition (basic residues).

The protein belongs to the eukaryotic ribosomal protein eL21 family.

The chain is Large ribosomal subunit protein eL21 from Methanococcus maripaludis (strain C5 / ATCC BAA-1333).